The following is a 397-amino-acid chain: Subtilisin-like protease 3 (397 aa).

An N-terminal signal peptide occupies residues 1-19 (MGCIKVISVFLAAIAAVDA). The propeptide occupies 20–116 (RAFFHNRGGS…VEHDRVVKLA (97 aa)). In terms of domain architecture, Inhibitor I9 spans 35 to 116 (SYIVVMKDGV…VEHDRVVKLA (82 aa)). Residues 126–397 (TWGLGRVSHR…NRLLYNGSGQ (272 aa)) form the Peptidase S8 domain. Residues aspartate 158 and histidine 189 each act as charge relay system in the active site. A glycan (N-linked (GlcNAc...) asparagine) is linked at asparagine 250. The active-site Charge relay system is serine 344. Residue asparagine 393 is glycosylated (N-linked (GlcNAc...) asparagine).

It belongs to the peptidase S8 family.

It is found in the secreted. In terms of biological role, secreted subtilisin-like serine protease with keratinolytic activity that contributes to pathogenicity. This chain is Subtilisin-like protease 3 (SUB3), found in Trichophyton equinum (Horse ringworm fungus).